A 591-amino-acid polypeptide reads, in one-letter code: Calnexin (591 aa).

An N-terminal signal peptide occupies residues methionine 1 to alanine 20. The Lumenal portion of the chain corresponds to histidine 21–proline 482. Ca(2+) contacts are provided by serine 75 and aspartate 118. Position 138 is an N6-acetyllysine (lysine 138). The cysteines at positions 161 and 195 are disulfide-linked. 4 residues coordinate an alpha-D-glucoside: tyrosine 165, lysine 167, tyrosine 186, and aspartate 193. The tract at residues glycine 261 to methionine 347 is disordered. A compositionally biased stretch (basic and acidic residues) spans arginine 275–lysine 320. Residues isoleucine 277–glutamate 410 form a p domain (Extended arm) region. 5 consecutive repeat copies span residues aspartate 279–arginine 291, aspartate 296–aspartate 308, aspartate 315–aspartate 327, aspartate 334–aspartate 346, and glycine 349–proline 359. 2 4 X approximate repeats regions span residues aspartate 279–aspartate 346 and glycine 349–proline 406. The span at tryptophan 324–methionine 347 shows a compositional bias: acidic residues. Residues aspartate 327 to lysine 360 form an interaction with PPIB region. Cysteine 361 and cysteine 367 are oxidised to a cystine. 3 repeat units span residues glycine 368–proline 378, glycine 382–proline 392, and glycine 396–proline 406. Residue glutamate 426 coordinates an alpha-D-glucoside. Aspartate 437 contributes to the Ca(2+) binding site. A helical transmembrane segment spans residues tryptophan 483–cysteine 503. Residues cysteine 503 and cysteine 504 are each lipidated (S-palmitoyl cysteine). At cysteine 504–glutamate 591 the chain is on the cytoplasmic side. The segment at cysteine 504–glutamate 591 is sufficient to mediate interaction with SGIP1. Positions glutamate 514–glycine 538 are enriched in basic and acidic residues. Residues glutamate 514 to glutamate 591 are disordered. The residue at position 553 (serine 553) is a Phosphoserine. Residues alanine 555–aspartate 568 are compositionally biased toward acidic residues. The residue at position 561 (threonine 561) is a Phosphothreonine. A Phosphoserine; by MAPK3 modification is found at serine 563. Serine 582 bears the Phosphoserine mark.

Belongs to the calreticulin family. In terms of assembly, interacts with MAPK3/ERK1. Interacts with KCNH2. Associates with ribosomes. Interacts with SGIP1; involved in negative regulation of endocytosis. The palmitoylated form interacts with the ribosome-translocon complex component SSR1, promoting efficient folding of glycoproteins. Interacts with SERPINA2P/SERPINA2 and with the S and Z variants of SERPINA1. Interacts with PPIB. Interacts with ZNRF4. Interacts with SMIM22. Interacts with TMX2. Interacts with TMEM35A/NACHO and CHRNA7. Interacts with reticulophagy regulators RETREG2 and RETREG3. Interacts with DNM1L; may form part of a larger protein complex at the ER-mitochondrial interface during mitochondrial fission. Interacts with ADAM7. Phosphorylated at Ser-563 by MAPK3/ERK1. Phosphorylation by MAPK3/ERK1 increases its association with ribosomes. In terms of processing, palmitoylation by DHHC6 leads to the preferential localization to the perinuclear rough ER. It mediates the association of calnexin with the ribosome-translocon complex (RTC) which is required for efficient folding of glycosylated proteins. Post-translationally, ubiquitinated, leading to proteasomal degradation. Probably ubiquitinated by ZNRF4.

Its subcellular location is the endoplasmic reticulum membrane. The protein resides in the mitochondrion membrane. It localises to the melanosome membrane. Functionally, calcium-binding protein that interacts with newly synthesized monoglucosylated glycoproteins in the endoplasmic reticulum. It may act in assisting protein assembly and/or in the retention within the ER of unassembled protein subunits. It seems to play a major role in the quality control apparatus of the ER by the retention of incorrectly folded proteins. Associated with partial T-cell antigen receptor complexes that escape the ER of immature thymocytes, it may function as a signaling complex regulating thymocyte maturation. Additionally it may play a role in receptor-mediated endocytosis at the synapse. In Rattus norvegicus (Rat), this protein is Calnexin (Canx).